Here is a 199-residue protein sequence, read N- to C-terminus: V-type proton ATPase subunit E (199 aa).

Belongs to the V-ATPase E subunit family.

In terms of biological role, produces ATP from ADP in the presence of a proton gradient across the membrane. The sequence is that of V-type proton ATPase subunit E from Clostridium botulinum (strain 657 / Type Ba4).